The sequence spans 256 residues: Probable sulfite/organosulfonate exporter TauE (256 aa).

8 consecutive transmembrane segments (helical) span residues 5–25 (LLLPLLGLQALLGAGTYFQTV), 33–53 (IVMGVTSGLGLAPVATVAAVV), 76–96 (AVAAAAIGILPSVVVGVLVLE), 103–123 (ATLLQLLLGAVILYGGLSAAL), 142–162 (VFGGLLSGMFGVSGPPLIFQF), 172–190 (IRCALILVFTVTSTVRTLF), 199–219 (AAVCVQAAIAVPVVVIATLLG), and 236–256 (FGVLIGIGASLMLPAISAWVL).

Belongs to the 4-toluene sulfonate uptake permease (TSUP) (TC 2.A.102) family.

The protein localises to the cell inner membrane. Could be a sulfite/organosulfonate exporter with a wide substrate range, including 3-sulfolactate and 3-sulfopyruvate. This is Probable sulfite/organosulfonate exporter TauE from Cupriavidus necator (strain ATCC 17699 / DSM 428 / KCTC 22496 / NCIMB 10442 / H16 / Stanier 337) (Ralstonia eutropha).